Here is a 162-residue protein sequence, read N- to C-terminus: MTRIIGLDPGMSKTGWAIIDMDERSNIEFLGSGTISTGNKLGMGERLHVIFEQLKKVISLYSPSEAAIEKIFVNKNPKSSLTLGYARGIVILVLEITELTMNEYDTNYVKKSITGNGHADKDQVIFMVKQIIKNLNIKCHHAADALAVAICHVYTKSSYFVR.

Catalysis depends on residues D8, E69, and H141. The Mg(2+) site is built by D8, E69, and H141.

The protein belongs to the RuvC family. In terms of assembly, homodimer which binds Holliday junction (HJ) DNA. The HJ becomes 2-fold symmetrical on binding to RuvC with unstacked arms; it has a different conformation from HJ DNA in complex with RuvA. In the full resolvosome a probable DNA-RuvA(4)-RuvB(12)-RuvC(2) complex forms which resolves the HJ. Requires Mg(2+) as cofactor.

The protein resides in the cytoplasm. It catalyses the reaction Endonucleolytic cleavage at a junction such as a reciprocal single-stranded crossover between two homologous DNA duplexes (Holliday junction).. Its function is as follows. The RuvA-RuvB-RuvC complex processes Holliday junction (HJ) DNA during genetic recombination and DNA repair. Endonuclease that resolves HJ intermediates. Cleaves cruciform DNA by making single-stranded nicks across the HJ at symmetrical positions within the homologous arms, yielding a 5'-phosphate and a 3'-hydroxyl group; requires a central core of homology in the junction. The consensus cleavage sequence is 5'-(A/T)TT(C/G)-3'. Cleavage occurs on the 3'-side of the TT dinucleotide at the point of strand exchange. HJ branch migration catalyzed by RuvA-RuvB allows RuvC to scan DNA until it finds its consensus sequence, where it cleaves and resolves the cruciform DNA. The protein is Crossover junction endodeoxyribonuclease RuvC of Wolbachia sp. subsp. Brugia malayi (strain TRS).